The following is a 508-amino-acid chain: Mitochondrial distribution and morphology protein 10 (508 aa).

Positions 160 to 195 are disordered; sequence PAHPTSTRPTPPQTPPSHTRQPSEPSTPAPSPTPGN.

This sequence belongs to the MDM10 family. As to quaternary structure, component of the ER-mitochondria encounter structure (ERMES) or MDM complex, composed of MMM1, MDM10, MDM12 and MDM34. Associates with the mitochondrial outer membrane sorting assembly machinery SAM(core) complex.

It localises to the mitochondrion outer membrane. Its function is as follows. Component of the ERMES/MDM complex, which serves as a molecular tether to connect the endoplasmic reticulum and mitochondria. Components of this complex are involved in the control of mitochondrial shape and protein biogenesis and may function in phospholipid exchange. MDM10 is involved in the late assembly steps of the general translocase of the mitochondrial outer membrane (TOM complex). Functions in the TOM40-specific route of the assembly of outer membrane beta-barrel proteins, including the association of TOM40 with the receptor TOM22 and small TOM proteins. Can associate with the SAM(core) complex as well as the MDM12-MMM1 complex, both involved in late steps of the major beta-barrel assembly pathway, that is responsible for biogenesis of all outer membrane beta-barrel proteins. May act as a switch that shuttles between both complexes and channels precursor proteins into the TOM40-specific pathway. Plays a role in mitochondrial morphology and in the inheritance of mitochondria. This is Mitochondrial distribution and morphology protein 10 from Cryptococcus neoformans var. neoformans serotype D (strain JEC21 / ATCC MYA-565) (Filobasidiella neoformans).